Here is a 274-residue protein sequence, read N- to C-terminus: Tropomyosin (274 aa).

The span at Met1 to Asn35 shows a compositional bias: basic and acidic residues. The interval Met1–Asn45 is disordered. Positions Met1–Tyr274 form a coiled coil.

This sequence belongs to the tropomyosin family. Homodimer.

Tropomyosin, in association with the troponin complex, plays a central role in the calcium dependent regulation of muscle contraction. In Metapenaeus ensis (Greasyback shrimp), this protein is Tropomyosin.